Consider the following 280-residue polypeptide: 4-diphosphocytidyl-2-C-methyl-D-erythritol kinase (280 aa).

Residue K11 is part of the active site. 95-105 (PVGAGLGGGSS) lines the ATP pocket. D137 is an active-site residue.

The protein belongs to the GHMP kinase family. IspE subfamily.

It carries out the reaction 4-CDP-2-C-methyl-D-erythritol + ATP = 4-CDP-2-C-methyl-D-erythritol 2-phosphate + ADP + H(+). The protein operates within isoprenoid biosynthesis; isopentenyl diphosphate biosynthesis via DXP pathway; isopentenyl diphosphate from 1-deoxy-D-xylulose 5-phosphate: step 3/6. Its function is as follows. Catalyzes the phosphorylation of the position 2 hydroxy group of 4-diphosphocytidyl-2C-methyl-D-erythritol. This chain is 4-diphosphocytidyl-2-C-methyl-D-erythritol kinase, found in Geobacter sp. (strain M21).